The chain runs to 56 residues: Large ribosomal subunit protein bL33 (56 aa).

Positions 1–12 (MATKGGRDKIKL) are enriched in basic and acidic residues. The interval 1 to 24 (MATKGGRDKIKLESTAGTGHFYTT) is disordered. Over residues 15-24 (TAGTGHFYTT) the composition is skewed to polar residues.

It belongs to the bacterial ribosomal protein bL33 family.

This chain is Large ribosomal subunit protein bL33, found in Paracidovorax citrulli (strain AAC00-1) (Acidovorax citrulli).